Here is a 423-residue protein sequence, read N- to C-terminus: O-methyltransferase aoiF (423 aa).

Asp273 provides a ligand contact to S-adenosyl-L-methionine. His324 (proton acceptor) is an active-site residue.

Belongs to the class I-like SAM-binding methyltransferase superfamily. Cation-independent O-methyltransferase family.

The protein operates within secondary metabolite biosynthesis. Its function is as follows. O-methyltransferase; part of the gene cluster that mediates the biosynthesis of a methylated derivative of known natural products orthosporin and diaporthin. Within the pathway, aoiF catalyzes the biotransformation of orthosporin to diaporthin but also of diaporthin to the final product, by performing a tandem methylation of the polyketide core. Orthosporin is produced by an oxidoreductase that has still to be identified and that catalyzes the stereospecific reduction of the carbonyl moiety of the hexaketide isocoumarin scaffold produced by the non-reducing polyketide synthase aoiG to generate the S-configured secondary alcohol at C-11. This Aspergillus oryzae (strain ATCC 42149 / RIB 40) (Yellow koji mold) protein is O-methyltransferase aoiF.